The sequence spans 338 residues: tRNA N6-adenosine threonylcarbamoyltransferase (338 aa).

2 residues coordinate Fe cation: histidine 111 and histidine 115. Substrate-binding positions include 134 to 138 (LVSGG), aspartate 167, glycine 180, and asparagine 272. A Fe cation-binding site is contributed by aspartate 300.

Belongs to the KAE1 / TsaD family. Requires Fe(2+) as cofactor.

It localises to the cytoplasm. It catalyses the reaction L-threonylcarbamoyladenylate + adenosine(37) in tRNA = N(6)-L-threonylcarbamoyladenosine(37) in tRNA + AMP + H(+). In terms of biological role, required for the formation of a threonylcarbamoyl group on adenosine at position 37 (t(6)A37) in tRNAs that read codons beginning with adenine. Is involved in the transfer of the threonylcarbamoyl moiety of threonylcarbamoyl-AMP (TC-AMP) to the N6 group of A37, together with TsaE and TsaB. TsaD likely plays a direct catalytic role in this reaction. The protein is tRNA N6-adenosine threonylcarbamoyltransferase of Shewanella baltica (strain OS155 / ATCC BAA-1091).